The sequence spans 78 residues: MATSGRLLCFCLVLGLVFESLGYSEARPPRDRKRTVTAKRYDPLAQRVDCGGSPCAFGCCENDVCRELDCEYAPPFGF.

Residues 1-21 (MATSGRLLCFCLVLGLVFESL) form the signal peptide. A propeptide spanning residues 22 to 47 (GYSEARPPRDRKRTVTAKRYDPLAQR) is cleaved from the precursor.

This sequence belongs to the teretoxin M (TM) superfamily. In terms of processing, contains 3 disulfide bonds. In terms of tissue distribution, expressed by the venom duct.

The protein resides in the secreted. This Terebra subulata (Chocolate spotted auger) protein is Teretoxin Tsu6.15.